Here is a 93-residue protein sequence, read N- to C-terminus: M-zodatoxin-Lt5a (93 aa).

Positions 1–22 (MKYCVVILALLVALVCITESRS) are cleaved as a signal peptide. The propeptide occupies 23–64 (TETGYAVAETLEDNDLDELQAYLEEIAEASEMEDFSNIEEAR). The short motif at 61 to 64 (EEAR) is the Processing quadruplet motif element. At L92 the chain carries Leucine amide.

In terms of processing, cleavage of the propeptide depends on the processing quadruplet motif (XXXR, with at least one of X being E). As to expression, expressed by the venom gland.

It is found in the secreted. Has antimicrobial activity against. Gram-positive bacteria (A.globiformis VKM Ac-1112 (MIC=1.1 uM), and B.subtilis VKM B-501 (MIC=0.6 uM)), Gram-negative bacteria (E.coli DH5-alpha (MIC=0.6 uM), E.coli MH1 (MIC=0.6 uM), and P.aeruginosa PAO1 (MIC=18 uM)), and yeasts (P.pastoris GS115 (MIC&gt;37 uM), and S.cerevisiae Y190 (MIC&gt;37 uM)). Also has a moderate hemolytic activity against rabbit erythrocytes. Causes paralysis, but is not lethal when injected into insect (M.domestica) larvae. The chain is M-zodatoxin-Lt5a from Lachesana tarabaevi (Spider).